The chain runs to 115 residues: NADH-ubiquinone oxidoreductase chain 3 (115 aa).

A run of 3 helical transmembrane segments spans residues 4–24 (LMIL…AFWL), 55–75 (FFLV…LLPL), and 84–104 (INMM…GLAY).

The protein belongs to the complex I subunit 3 family. Core subunit of respiratory chain NADH dehydrogenase (Complex I) which is composed of 45 different subunits. Interacts with TMEM186. Interacts with TMEM242.

It is found in the mitochondrion inner membrane. The enzyme catalyses a ubiquinone + NADH + 5 H(+)(in) = a ubiquinol + NAD(+) + 4 H(+)(out). Core subunit of the mitochondrial membrane respiratory chain NADH dehydrogenase (Complex I) which catalyzes electron transfer from NADH through the respiratory chain, using ubiquinone as an electron acceptor. Essential for the catalytic activity of complex I. This Podomys floridanus (Florida mouse) protein is NADH-ubiquinone oxidoreductase chain 3.